The chain runs to 205 residues: Ribosomal RNA small subunit methyltransferase J (205 aa).

S-adenosyl-L-methionine-binding positions include 56-57 (RD), 72-73 (ER), and aspartate 124.

The protein belongs to the methyltransferase superfamily. RsmJ family.

Its subcellular location is the cytoplasm. It catalyses the reaction guanosine(1516) in 16S rRNA + S-adenosyl-L-methionine = N(2)-methylguanosine(1516) in 16S rRNA + S-adenosyl-L-homocysteine + H(+). Its function is as follows. Specifically methylates the guanosine in position 1516 of 16S rRNA. The protein is Ribosomal RNA small subunit methyltransferase J of Brucella anthropi (strain ATCC 49188 / DSM 6882 / CCUG 24695 / JCM 21032 / LMG 3331 / NBRC 15819 / NCTC 12168 / Alc 37) (Ochrobactrum anthropi).